A 253-amino-acid polypeptide reads, in one-letter code: Blue-light photoreceptor (253 aa).

A PAS domain is found at 6–79 (QFDVILKALN…AKIRHAINEK (74 aa)). Cys-56 carries the post-translational modification S-4a-FMN cysteine. The 54-residue stretch at 80-133 (STANVLLKNYRKDGTSFMNELTIEPIYDDHEHLYFVGIQKDVTTEHDYQLELEK) folds into the PAC domain. The 112-residue stretch at 142 to 253 (STPIVPIKEN…STIKEALQFY (112 aa)) folds into the STAS domain.

Post-translationally, FMN binds covalently to cysteine after exposure to blue light and this bond is spontaneously broken in the dark.

In terms of biological role, exhibits the same spectroscopical features and blue-light induced photochemistry as plants phototropins, with the reversible formation of a blue-shifted photoproduct, assigned to an FMN-cysteine thiol adduct. Positive regulator in the activation of the general stress transcription factor sigma-B. In Listeria monocytogenes serovar 1/2a (strain ATCC BAA-679 / EGD-e), this protein is Blue-light photoreceptor.